The primary structure comprises 385 residues: Succinate--CoA ligase [ADP-forming] subunit beta (385 aa).

In terms of domain architecture, ATP-grasp spans 9 to 244; sequence KEILRKYGVP…QDEEDPLETR (236 aa). Residues Lys-46, 53-55, Glu-99, Cys-102, and Glu-107 contribute to the ATP site; that span reads GRG. Mg(2+)-binding residues include Asn-199 and Asp-213. Residues Asn-264 and 321–323 contribute to the substrate site; that span reads GIM.

The protein belongs to the succinate/malate CoA ligase beta subunit family. Heterotetramer of two alpha and two beta subunits. Mg(2+) is required as a cofactor.

It catalyses the reaction succinate + ATP + CoA = succinyl-CoA + ADP + phosphate. The catalysed reaction is GTP + succinate + CoA = succinyl-CoA + GDP + phosphate. The protein operates within carbohydrate metabolism; tricarboxylic acid cycle; succinate from succinyl-CoA (ligase route): step 1/1. Functionally, succinyl-CoA synthetase functions in the citric acid cycle (TCA), coupling the hydrolysis of succinyl-CoA to the synthesis of either ATP or GTP and thus represents the only step of substrate-level phosphorylation in the TCA. The beta subunit provides nucleotide specificity of the enzyme and binds the substrate succinate, while the binding sites for coenzyme A and phosphate are found in the alpha subunit. The chain is Succinate--CoA ligase [ADP-forming] subunit beta from Rickettsia bellii (strain OSU 85-389).